The primary structure comprises 208 residues: Redox-sensing transcriptional repressor Rex (208 aa).

A DNA-binding region (H-T-H motif) is located at residues 15 to 54 (SYYMCLERLLDEGVEVVSSEELARRLDLKASQIRKDLSYF). 89–94 (GAGNIG) is a binding site for NAD(+).

This sequence belongs to the transcriptional regulatory Rex family. Homodimer.

It localises to the cytoplasm. Its function is as follows. Modulates transcription in response to changes in cellular NADH/NAD(+) redox state. The sequence is that of Redox-sensing transcriptional repressor Rex from Thermotoga petrophila (strain ATCC BAA-488 / DSM 13995 / JCM 10881 / RKU-1).